We begin with the raw amino-acid sequence, 185 residues long: ATP synthase subunit b 2 (185 aa).

Positions 1–24 (MADSHGNAKGATAHTEAGGGHKAP) are disordered. The chain crosses the membrane as a helical span at residues 34–56 (ASQLVSLTIAFVALYLISSRLAL).

Belongs to the ATPase B chain family. In terms of assembly, F-type ATPases have 2 components, F(1) - the catalytic core - and F(0) - the membrane proton channel. F(1) has five subunits: alpha(3), beta(3), gamma(1), delta(1), epsilon(1). F(0) has three main subunits: a(1), b(2) and c(10-14). The alpha and beta chains form an alternating ring which encloses part of the gamma chain. F(1) is attached to F(0) by a central stalk formed by the gamma and epsilon chains, while a peripheral stalk is formed by the delta and b chains.

It is found in the cell inner membrane. Its function is as follows. F(1)F(0) ATP synthase produces ATP from ADP in the presence of a proton or sodium gradient. F-type ATPases consist of two structural domains, F(1) containing the extramembraneous catalytic core and F(0) containing the membrane proton channel, linked together by a central stalk and a peripheral stalk. During catalysis, ATP synthesis in the catalytic domain of F(1) is coupled via a rotary mechanism of the central stalk subunits to proton translocation. Component of the F(0) channel, it forms part of the peripheral stalk, linking F(1) to F(0). The b'-subunit is a diverged and duplicated form of b found in plants and photosynthetic bacteria. This chain is ATP synthase subunit b 2 (atpF2), found in Nitrobacter hamburgensis (strain DSM 10229 / NCIMB 13809 / X14).